A 323-amino-acid chain; its full sequence is Protoheme IX farnesyltransferase (323 aa).

Helical transmembrane passes span 50–70 (IVLI…ANTF), 97–117 (NRDA…WLWL), 118–138 (LCDS…YIFV), 150–170 (NIVW…AVIV), 184–204 (AIVL…ALAM), 231–248 (IVWY…LIPA), 252–274 (IYAA…LHLG), and 293–313 (YLAV…ETIG).

The protein belongs to the UbiA prenyltransferase family. Protoheme IX farnesyltransferase subfamily.

It is found in the cell membrane. It catalyses the reaction heme b + (2E,6E)-farnesyl diphosphate + H2O = Fe(II)-heme o + diphosphate. Its pathway is porphyrin-containing compound metabolism; heme O biosynthesis; heme O from protoheme: step 1/1. Converts heme B (protoheme IX) to heme O by substitution of the vinyl group on carbon 2 of heme B porphyrin ring with a hydroxyethyl farnesyl side group. This is Protoheme IX farnesyltransferase from Corynebacterium glutamicum (strain R).